The chain runs to 208 residues: 3-demethoxyubiquinol 3-hydroxylase (208 aa).

Fe cation-binding residues include glutamate 57, glutamate 87, histidine 90, glutamate 139, glutamate 171, and histidine 174.

Belongs to the COQ7 family. It depends on Fe cation as a cofactor.

It is found in the cell membrane. The enzyme catalyses a 5-methoxy-2-methyl-3-(all-trans-polyprenyl)benzene-1,4-diol + AH2 + O2 = a 3-demethylubiquinol + A + H2O. It functions in the pathway cofactor biosynthesis; ubiquinone biosynthesis. Its function is as follows. Catalyzes the hydroxylation of 2-nonaprenyl-3-methyl-6-methoxy-1,4-benzoquinol during ubiquinone biosynthesis. This chain is 3-demethoxyubiquinol 3-hydroxylase, found in Burkholderia mallei (strain NCTC 10229).